Consider the following 596-residue polypeptide: MKLSVLTFVVDALLVCSSIVDAGVTDFPSLPSNEVYVKMNFQKKYGSSFENALDDTKGRTRLMTRDDDYELVELTNQNSFYSVELDIGTPPQKVTVLVDTGSSDLWVTGSDNPYCSTKKKDTTGSSFKQVNKDALASVVESVFTEISYDTTIVTSEATATFDSTASTSQLIDCATYGTFNTSKSSTFNSNNTEFSIAYGDTTFASGTWGHDQLSLNDLNITGLSFAVANETNSTVGVLGIGLPGLESTYSGVSLSSVQKSYTYNNFPMVLKNSGVIKSTAYSLFANDSDSKHGTILFGAVDHGKYAGDLYTIPIINTLQHRGYKDPIQFQVTLQGLGTSKGDKEDNLTTLTTTKIPVLLDSGTTISYMPTELVKMLADQVGATYSSAYGYYIMDCIKEMEEESSIIFDFGGFYLSNWLSDFQLVTDSRSNICILGIAPQSDPTIILGDNFLANTYVVYDLDNMEISMAQANFSDDGEYIEIIESAVPSALKAPGYSSTWSTYESIVSGGNMFSTAANSSISYFASTSHSATSSSSSKGQKTQTSTTALSISKSTSSTSSTGMLSPTSSSSTRKENGGHNLNPPFFARFITAIFHHI.

The signal sequence occupies residues M1–A22. Residues G23–R65 constitute a propeptide that is removed on maturation. In terms of domain architecture, Peptidase A1 spans Y81 to A468. Residue D99 is part of the active site. N180, N190, N219, N229, N232, N286, and N346 each carry an N-linked (GlcNAc...) asparagine glycan. Residue D360 is part of the active site. N-linked (GlcNAc...) asparagine glycosylation is found at N471 and N517. Low complexity predominate over residues A530–S570. The segment at A530–H578 is disordered. N575 is lipidated: GPI-anchor amidated asparagine. Residues G576–I596 constitute a propeptide, removed in mature form.

It belongs to the peptidase A1 family.

Its subcellular location is the cell membrane. The enzyme catalyses Hydrolyzes various precursor proteins with Arg or Lys in P1, and commonly Arg or Lys also in P2. The P3 amino acid is usually non-polar, but otherwise additional basic amino acids are favorable in both non-prime and prime positions.. Functionally, cleaves proteins C-terminally to the most C-terminal basic residue. Can process the alpha-mating factor precursor. Required for cell wall integrity. The protein is Aspartic proteinase MKC7 (MKC7) of Saccharomyces cerevisiae (strain ATCC 204508 / S288c) (Baker's yeast).